Consider the following 360-residue polypeptide: CFA/I fimbrial subunit E (360 aa).

Its subcellular location is the fimbrium. In Escherichia coli, this protein is CFA/I fimbrial subunit E (cfaE).